Reading from the N-terminus, the 624-residue chain is E3 ubiquitin-protein ligase RLIM (624 aa).

At M1 the chain carries N-acetylmethionine. A compositionally biased stretch (basic and acidic residues) spans 1–11 (MENSDSNDKGS). Disordered stretches follow at residues 1 to 25 (MENS…QMDR), 72 to 251 (KEGP…SQTF), 257 to 276 (NETE…QQIS), 291 to 363 (TRNA…RGGF), and 424 to 522 (SDSE…TFDE). Positions 104-132 (SVRQTGNTTRSGQRGNQSWRAVSRTNPNS) are enriched in polar residues. Positions 142–153 (NVNRNNGSQNSE) are enriched in low complexity. Phosphoserine is present on S164. The segment covering 165–188 (GENVENNSQRQVENPRSESTSARP) has biased composition (polar residues). S195, S228, S230, and S276 each carry phosphoserine. The segment covering 214–229 (RSPDHRRTRARAERSR) has biased composition (basic and acidic residues). Residues 291-315 (TRNASQGAGSSDTAASGESTGSGQR) are compositionally biased toward polar residues. A compositionally biased stretch (basic and acidic residues) spans 329 to 339 (RPGEYRQRDSI). The span at 340-356 (ASRTRSRSQTPNNTVTY) shows a compositional bias: polar residues. Gly residues predominate over residues 445-454 (GRGGSGGGSS). The span at 455 to 507 (SGSSSSSSSSSSSSSSSSSSSSPSSSSGGESSETSSDLFEGSNEGSSSSGSSG) shows a compositional bias: low complexity. Residues 570 to 611 (CSVCITEYTEGNKLRKLPCSHEYHVHCIDRWLSENSTCPICR) form an RING-type zinc finger. Residues 621–624 (ESVV) carry the PDZ-binding motif.

It belongs to the RNF12 family. Interacts with LIM/homeobox factors such as LHX3. Interacts with LDB1, LDB2 and SIN3A. Interacts with LIMK1. Interacts (via N-terminus) with TERF1. Interacts (via C-terminus) with ESR1. In terms of tissue distribution, expressed in many tissues.

It localises to the nucleus. The enzyme catalyses S-ubiquitinyl-[E2 ubiquitin-conjugating enzyme]-L-cysteine + [acceptor protein]-L-lysine = [E2 ubiquitin-conjugating enzyme]-L-cysteine + N(6)-ubiquitinyl-[acceptor protein]-L-lysine.. Its pathway is protein modification; protein ubiquitination. Functionally, E3 ubiquitin-protein ligase. Acts as a negative coregulator for LIM homeodomain transcription factors by mediating the ubiquitination and subsequent degradation of LIM cofactors LDB1 and LDB2 and by mediating the recruitment the SIN3a/histone deacetylase corepressor complex. Ubiquitination and degradation of LIM cofactors LDB1 and LDB2 allows DNA-bound LIM homeodomain transcription factors to interact with other protein partners such as RLIM. Plays a role in telomere length-mediated growth suppression by mediating the ubiquitination and degradation of TERF1. By targeting ZFP42 for degradation, acts as an activator of random inactivation of X chromosome in the embryo, a stochastic process in which one X chromosome is inactivated to minimize sex-related dosage differences of X-encoded genes in somatic cells of female placental mammals. The sequence is that of E3 ubiquitin-protein ligase RLIM (RLIM) from Homo sapiens (Human).